The chain runs to 286 residues: Lipoyl synthase (286 aa).

Cys-38, Cys-43, Cys-49, Cys-64, Cys-68, Cys-71, and Ser-276 together coordinate [4Fe-4S] cluster. The 216-residue stretch at 50–265 folds into the Radical SAM core domain; it reads WEQGVATFMI…ENIALDMGFL (216 aa).

It belongs to the radical SAM superfamily. Lipoyl synthase family. [4Fe-4S] cluster is required as a cofactor.

The protein localises to the cytoplasm. The catalysed reaction is [[Fe-S] cluster scaffold protein carrying a second [4Fe-4S](2+) cluster] + N(6)-octanoyl-L-lysyl-[protein] + 2 oxidized [2Fe-2S]-[ferredoxin] + 2 S-adenosyl-L-methionine + 4 H(+) = [[Fe-S] cluster scaffold protein] + N(6)-[(R)-dihydrolipoyl]-L-lysyl-[protein] + 4 Fe(3+) + 2 hydrogen sulfide + 2 5'-deoxyadenosine + 2 L-methionine + 2 reduced [2Fe-2S]-[ferredoxin]. It functions in the pathway protein modification; protein lipoylation via endogenous pathway; protein N(6)-(lipoyl)lysine from octanoyl-[acyl-carrier-protein]: step 2/2. Its function is as follows. Catalyzes the radical-mediated insertion of two sulfur atoms into the C-6 and C-8 positions of the octanoyl moiety bound to the lipoyl domains of lipoate-dependent enzymes, thereby converting the octanoylated domains into lipoylated derivatives. The chain is Lipoyl synthase from Karelsulcia muelleri (strain GWSS) (Sulcia muelleri).